Consider the following 247-residue polypeptide: Triosephosphate isomerase (247 aa).

8-10 (NWK) contributes to the substrate binding site. The active-site Electrophile is the histidine 95. Glutamate 162 serves as the catalytic Proton acceptor. The substrate site is built by glycine 168 and serine 207.

Belongs to the triosephosphate isomerase family. As to quaternary structure, homodimer.

The protein resides in the cytoplasm. It catalyses the reaction D-glyceraldehyde 3-phosphate = dihydroxyacetone phosphate. Its pathway is carbohydrate biosynthesis; gluconeogenesis. The protein operates within carbohydrate degradation; glycolysis; D-glyceraldehyde 3-phosphate from glycerone phosphate: step 1/1. Functionally, involved in the gluconeogenesis. Catalyzes stereospecifically the conversion of dihydroxyacetone phosphate (DHAP) to D-glyceraldehyde-3-phosphate (G3P). In Gluconacetobacter diazotrophicus (strain ATCC 49037 / DSM 5601 / CCUG 37298 / CIP 103539 / LMG 7603 / PAl5), this protein is Triosephosphate isomerase.